A 215-amino-acid chain; its full sequence is Ion-translocating oxidoreductase complex subunit G (215 aa).

Residues 9–29 (GLILSLFAIITSGLIALTYFG) traverse the membrane as a helical segment. Residue threonine 176 is modified to FMN phosphoryl threonine.

Belongs to the RnfG family. In terms of assembly, the complex is composed of six subunits: RnfA, RnfB, RnfC, RnfD, RnfE and RnfG. The cofactor is FMN.

It is found in the cell inner membrane. Its function is as follows. Part of a membrane-bound complex that couples electron transfer with translocation of ions across the membrane. The sequence is that of Ion-translocating oxidoreductase complex subunit G from Pseudoalteromonas atlantica (strain T6c / ATCC BAA-1087).